The primary structure comprises 274 residues: Tropomyosin (274 aa).

The interval 1–30 (MKLEKDNAMDRADTLEQQNKEANIRAEKAE) is disordered. Positions 1 to 274 (MKLEKDNAMD…DQTFSELSGY (274 aa)) form a coiled coil.

This sequence belongs to the tropomyosin family. In terms of assembly, homodimer.

In terms of biological role, tropomyosin, in association with the troponin complex, plays a central role in the calcium dependent regulation of muscle contraction. In Panulirus stimpsoni (Chinese spiny lobster), this protein is Tropomyosin.